A 196-amino-acid chain; its full sequence is Large ribosomal subunit protein bL17 (196 aa).

A disordered region spans residues 133–196; it reads AAKRDADKKE…KPAAEEKDAK (64 aa). Residues 134–143 are compositionally biased toward basic and acidic residues; sequence AKRDADKKEA. Over residues 152-164 the composition is skewed to acidic residues; it reads EVAETEAAPEAEA. Basic and acidic residues predominate over residues 184–196; the sequence is AAEKPAAEEKDAK.

It belongs to the bacterial ribosomal protein bL17 family. Part of the 50S ribosomal subunit. Contacts protein L32.

This chain is Large ribosomal subunit protein bL17, found in Arthrobacter sp. (strain FB24).